A 490-amino-acid polypeptide reads, in one-letter code: MTSNTGMLPLTPGLGPLAPSIYASNTNNKVLIIDNGGHTLKIATNNPSQPHIIVPNQVGKVKNEKHQIMGEELINYNDPSEVRSRNPMEKGYITNWGLEKEIWDYAFKRDDMKIKPQDYNLLLTEAPNSLDDLRKTMYEVVYEQYKFKSLYLTTSSTLGLVHIKQQLLQYQQQQHQPPLDASMISLLKSPCHLVVDCGYSSTHIIPHFQNTRLNYAIKRFNIGGKLLTNYLKEIVSFRYWDMMHETKLMNTIKEKTCFISKDFIFDIKRSQIDKLNSNLKIDYVLPNYNDPNNKTGYIKENLNNNNNNNDKNDKLNVNIEKDKDNNDIKSKEEGEEIKLNDEIKKDSTTTTNTTKEEDMEQVLSLVNERFTVPELLFNPSDIGMNQAGLAESIVQSINCTNSNLHIPLYSNIILLGGSTLFPGLKERLELELRKLAPEQYNINIFQPQDPILSPLYGGIRLAQQPDYLKYSISKQDYEEYGYNYCNKKFF.

It belongs to the actin family. ARP6 subfamily.

It is found in the cytoplasm. The protein localises to the cytoskeleton. The chain is Actin-related protein 6 from Dictyostelium discoideum (Social amoeba).